The following is a 146-amino-acid chain: Large ribosomal subunit protein uL15 (146 aa).

The interval 1–54 is disordered; the sequence is MNLTDLRPADGSKQSGNFRRGRGHGSGNGKTAGKGHKGQKARSGAPRVGFEGGQ.

This sequence belongs to the universal ribosomal protein uL15 family. In terms of assembly, part of the 50S ribosomal subunit.

Binds to the 23S rRNA. The polypeptide is Large ribosomal subunit protein uL15 (Lachnoclostridium phytofermentans (strain ATCC 700394 / DSM 18823 / ISDg) (Clostridium phytofermentans)).